Here is a 508-residue protein sequence, read N- to C-terminus: Kinesin light chain (508 aa).

Residues 34–129 adopt a coiled-coil conformation; the sequence is IAEVQKDNEK…KKHLEFMASV (96 aa). A disordered region spans residues 156–175; sequence DEENEDRHNMSPTPPSQFAN. A Phosphothreonine modification is found at Thr-168. 6 TPR repeats span residues 186–219, 228–261, 270–303, 312–345, 354–387, and 437–470; these read LRTLHNLVIQYASQGRYEVAVPLCKQALEDLERT, ATMLNILALVYRDQNKYKEAANLLNDALSIRGKT, AATLNNLAVLYGKRGKYKDAEPLCKRALEIREKV, AKQLNNLALLCQNQGKYDEVEKYYQRALDIYESK, AKTKNNLAGCYLKQGRYTEAEILYKQVLTRAHER, and TTTLKNLGALYRRQGMFEAAETLEDCAMRSKKEA. Thr-477 is modified (phosphothreonine). 2 positions are modified to phosphoserine: Ser-480 and Ser-485. The interval 484 to 508 is disordered; it reads TSNEKRRSKAIKEDLDFSEEKNAKP. Basic and acidic residues predominate over residues 493 to 508; the sequence is AIKEDLDFSEEKNAKP.

Belongs to the kinesin light chain family. In terms of assembly, oligomeric complex composed of two heavy chains and two light chains. In terms of tissue distribution, ubiquitous.

Its subcellular location is the cytoplasm. The protein resides in the cytoskeleton. Its function is as follows. Kinesin is a microtubule-associated force-producing protein that may play a role in organelle transport. The light chain may function in coupling of cargo to the heavy chain or in the modulation of its ATPase activity. The sequence is that of Kinesin light chain (Klc) from Drosophila melanogaster (Fruit fly).